Here is a 309-residue protein sequence, read N- to C-terminus: Homoserine O-succinyltransferase (309 aa).

Cysteine 142 functions as the Acyl-thioester intermediate in the catalytic mechanism. Residues lysine 163 and serine 192 each contribute to the substrate site. The active-site Proton acceptor is the histidine 235. Glutamate 237 is a catalytic residue. Arginine 249 serves as a coordination point for substrate.

It belongs to the MetA family.

The protein localises to the cytoplasm. It carries out the reaction L-homoserine + succinyl-CoA = O-succinyl-L-homoserine + CoA. It participates in amino-acid biosynthesis; L-methionine biosynthesis via de novo pathway; O-succinyl-L-homoserine from L-homoserine: step 1/1. Functionally, transfers a succinyl group from succinyl-CoA to L-homoserine, forming succinyl-L-homoserine. This chain is Homoserine O-succinyltransferase, found in Enterobacter sp. (strain 638).